The primary structure comprises 110 residues: Protein NATD1 (110 aa).

The 91-residue stretch at 19–109 (EHDRQRRQFS…PLPQYLERLQ (91 aa)) folds into the N-acetyltransferase domain.

This sequence belongs to the NATD1 family. In terms of tissue distribution, expressed in the heart, testis, kidney and lung.

This is Protein NATD1 (Natd1) from Mus musculus (Mouse).